An 811-amino-acid polypeptide reads, in one-letter code: Metal transporter cnnm-1 (811 aa).

Residues 1–24 form the signal peptide; that stretch reads MSASCLRLLTLSLFILGQCNVTAA. N-linked (GlcNAc...) asparagine glycosylation is found at asparagine 20, asparagine 49, asparagine 61, and asparagine 122. Topologically, residues 25–204 are extracellular; it reads QNGVDDEVTT…KEYFLPLPLQ (180 aa). A CNNM transmembrane domain is found at 197-376; sequence YFLPLPLQIA…TDNGQVSNEL (180 aa). Residues 205-225 form a helical membrane-spanning segment; the sequence is IACIGFLLCLSALFSGLTLGL. Topologically, residues 226 to 259 are cytoplasmic; sequence MSLTPQELELVIKSGAIKEQKCAAKILPVRKKGN. Residues 260 to 280 traverse the membrane as a helical segment; it reads LLLCSLLLGNVIVNSAISILM. The Extracellular segment spans residues 281–284; the sequence is GELT. A helical membrane pass occupies residues 285 to 305; that stretch reads TGIYALIGSTMGIVIFGEILP. Residues 306 to 315 lie on the Cytoplasmic side of the membrane; sequence QSICVKKGLE. Residues 316-336 traverse the membrane as a helical segment; it reads VGAHTISITQLFIFLTFPIAW. Residues 337–811 are Extracellular-facing; it reads PVSKLLDCLL…EEEMALLDQP (475 aa). 2 consecutive CBS domains span residues 394–456 and 462–530; these read MTKI…NFTV and YHKH…INDE. N-linked (GlcNAc...) asparagine glycans are attached at residues asparagine 435 and asparagine 453. Residues 741–760 are disordered; the sequence is DVSHNSSAHNSNLSLVEKPG. Low complexity predominate over residues 743–755; sequence SHNSSAHNSNLSL. Residues asparagine 745 and asparagine 752 are each glycosylated (N-linked (GlcNAc...) asparagine).

Belongs to the ACDP family. Highly expressed in the intestine and in neurons, but it is also expressed in a variety of tissues including the pharynx, hypodermis, rectum and in muscles.

The protein localises to the basolateral cell membrane. Functionally, probable metal transporter. Probably acts redundantly with the other metal transport proteins cnnm-2, cnnm-3, cnnm-4 and cnnm-5 to regulate Mg(2+) homeostasis. Promotes postembryonic gonad development by regulating Mg(2+) levels, probably via AMPK signaling. This chain is Metal transporter cnnm-1, found in Caenorhabditis elegans.